We begin with the raw amino-acid sequence, 469 residues long: Ufm1-specific protease 2 (469 aa).

An N-acetylmethionine modification is found at Met1. Active-site residues include Cys302, Asp426, and His428.

The protein belongs to the peptidase C78 family. Expressed in brain.

Its subcellular location is the endoplasmic reticulum. It localises to the cytoplasm. The protein resides in the nucleus. Functionally, thiol-dependent isopeptidase that specifically cleaves UFM1, a ubiquitin-like modifier protein, from conjugated proteins, such as CD274/PD-L1, CYB5R3, DDRGK1, MRE11, RPL26/uL24, TRIP4 and RPL26/uL24. While it is also able to mediate the processing of UFM1 precursors, a prerequisite for conjugation reactions, UFSP2 mainly acts as a protein deUFMylase that mediates deconjugation of UFM1 from target proteins. Mediates deUFMylation of RPL26/uL24, a critical step to release the UFM1 ribosome E3 ligase (UREL) complex during the recycling of 60S ribosome subunits from the endoplasmic reticulum. Catalyzes deUFMylation of TRIP4, regulating intracellular nuclear receptors transactivation and thereby regulate cell proliferation and differentiation. This chain is Ufm1-specific protease 2, found in Homo sapiens (Human).